The primary structure comprises 399 residues: 4-hydroxy-3-methylbut-2-enyl diphosphate reductase (399 aa).

C66 provides a ligand contact to [4Fe-4S] cluster. H96 contributes to the (2E)-4-hydroxy-3-methylbut-2-enyl diphosphate binding site. A dimethylallyl diphosphate-binding site is contributed by H96. H96 contributes to the isopentenyl diphosphate binding site. Position 157 (C157) interacts with [4Fe-4S] cluster. Residue H185 coordinates (2E)-4-hydroxy-3-methylbut-2-enyl diphosphate. H185 contacts dimethylallyl diphosphate. An isopentenyl diphosphate-binding site is contributed by H185. The active-site Proton donor is E187. Residue T250 coordinates (2E)-4-hydroxy-3-methylbut-2-enyl diphosphate. A [4Fe-4S] cluster-binding site is contributed by C288. Residues S317, S318, N319, and S379 each contribute to the (2E)-4-hydroxy-3-methylbut-2-enyl diphosphate site. Positions 317, 318, 319, and 379 each coordinate dimethylallyl diphosphate. Isopentenyl diphosphate contacts are provided by S317, S318, N319, and S379.

Belongs to the IspH family. [4Fe-4S] cluster is required as a cofactor.

The catalysed reaction is isopentenyl diphosphate + 2 oxidized [2Fe-2S]-[ferredoxin] + H2O = (2E)-4-hydroxy-3-methylbut-2-enyl diphosphate + 2 reduced [2Fe-2S]-[ferredoxin] + 2 H(+). The enzyme catalyses dimethylallyl diphosphate + 2 oxidized [2Fe-2S]-[ferredoxin] + H2O = (2E)-4-hydroxy-3-methylbut-2-enyl diphosphate + 2 reduced [2Fe-2S]-[ferredoxin] + 2 H(+). It participates in isoprenoid biosynthesis; dimethylallyl diphosphate biosynthesis; dimethylallyl diphosphate from (2E)-4-hydroxy-3-methylbutenyl diphosphate: step 1/1. The protein operates within isoprenoid biosynthesis; isopentenyl diphosphate biosynthesis via DXP pathway; isopentenyl diphosphate from 1-deoxy-D-xylulose 5-phosphate: step 6/6. Catalyzes the conversion of 1-hydroxy-2-methyl-2-(E)-butenyl 4-diphosphate (HMBPP) into a mixture of isopentenyl diphosphate (IPP) and dimethylallyl diphosphate (DMAPP). Acts in the terminal step of the DOXP/MEP pathway for isoprenoid precursor biosynthesis. In Synechococcus sp. (strain WH7803), this protein is 4-hydroxy-3-methylbut-2-enyl diphosphate reductase.